Consider the following 170-residue polypeptide: Guided entry of tail-anchored proteins factor 1 (170 aa).

Residues 1–6 (MAAGFN) are Lumenal-facing. Residues 7–27 (WFLVLSSVFLCNLVKTFLPSI) form a helical membrane-spanning segment. Residues 28–96 (SSFLSKIFHK…KSRTAQQAKM (69 aa)) are Cytoplasmic-facing. The interaction with GET3/TRC40 stretch occupies residues 35–93 (FHKDADQEMEMRTEIQNMKMELSTISMMDEFARYARLERKINKMTDQLKTLVKSRTAQQ). Residues 61 to 91 (MMDEFARYARLERKINKMTDQLKTLVKSRTA) are a coiled coil. Residues 97 to 117 (KWIVNIAFYILQAALMISLIL) traverse the membrane as a helical segment. The Lumenal segment spans residues 118–137 (KYYADPVTVVPSKWIAPLER). A helical membrane pass occupies residues 138–158 (LVAFPSGVAGGVGITCWLVVC). The Cytoplasmic portion of the chain corresponds to 159–170 (NKVVALILQAVS).

The protein belongs to the WRB/GET1 family. As to quaternary structure, component of the Golgi to ER traffic (GET) complex, which is composed of GET1/WRB, CAMLG/GET2 and GET3/TRC40. Within the complex, GET1 and CAMLG form a heterotetramer which is stabilized by phosphatidylinositol binding and which binds to the GET3 homodimer.

It is found in the endoplasmic reticulum membrane. In terms of biological role, required for the post-translational delivery of tail-anchored (TA) proteins to the endoplasmic reticulum (ER). Together with CAMLG/GET2, acts as a membrane receptor for soluble GET3/TRC40, which recognizes and selectively binds the transmembrane domain of TA proteins in the cytosol. Required to ensure correct topology and ER insertion of CAMLG. The sequence is that of Guided entry of tail-anchored proteins factor 1 from Danio rerio (Zebrafish).